The primary structure comprises 90 residues: Putative beta-neurotoxin RjAa2f (90 aa).

The N-terminal stretch at 1–18 (MKILIFIIASFMLIGVEC) is a signal peptide. Positions 19-89 (KEGYPMGSDG…VWDSKTNKCG (71 aa)) constitute an LCN-type CS-alpha/beta domain. 4 cysteine pairs are disulfide-bonded: C29/C88, C33/C62, C40/C69, and C44/C71.

The protein belongs to the long (4 C-C) scorpion toxin superfamily. Sodium channel inhibitor family. Beta subfamily. In terms of tissue distribution, expressed by the venom gland.

It is found in the secreted. Functionally, beta toxins bind voltage-independently at site-4 of sodium channels (Nav) and shift the voltage of activation toward more negative potentials thereby affecting sodium channel activation and promoting spontaneous and repetitive firing. In Rhopalurus junceus (Caribbean blue scorpion), this protein is Putative beta-neurotoxin RjAa2f.